The primary structure comprises 353 residues: Photosystem II D2 protein (353 aa).

The residue at position 2 (threonine 2) is an N-acetylthreonine. At threonine 2 the chain carries Phosphothreonine. A helical transmembrane segment spans residues cysteine 41 to threonine 61. Histidine 118 contributes to the chlorophyll a binding site. Residues glycine 125–proline 141 traverse the membrane as a helical segment. Pheophytin a-binding residues include glutamine 130 and asparagine 143. Residues valine 153–serine 166 form a helical membrane-spanning segment. Residue histidine 198 participates in chlorophyll a binding. The helical transmembrane segment at alanine 208–aspartate 228 threads the bilayer. A plastoquinone is bound by residues histidine 215 and phenylalanine 262. Histidine 215 contributes to the Fe cation binding site. Fe cation is bound at residue histidine 269. The chain crosses the membrane as a helical span at residues glycine 279 to arginine 295.

The protein belongs to the reaction center PufL/M/PsbA/D family. As to quaternary structure, PSII is composed of 1 copy each of membrane proteins PsbA, PsbB, PsbC, PsbD, PsbE, PsbF, PsbH, PsbI, PsbJ, PsbK, PsbL, PsbM, PsbT, PsbX, PsbY, PsbZ, Psb30/Ycf12, at least 3 peripheral proteins of the oxygen-evolving complex and a large number of cofactors. It forms dimeric complexes. The cofactor is The D1/D2 heterodimer binds P680, chlorophylls that are the primary electron donor of PSII, and subsequent electron acceptors. It shares a non-heme iron and each subunit binds pheophytin, quinone, additional chlorophylls, carotenoids and lipids. There is also a Cl(-1) ion associated with D1 and D2, which is required for oxygen evolution. The PSII complex binds additional chlorophylls, carotenoids and specific lipids..

It localises to the plastid membrane. It carries out the reaction 2 a plastoquinone + 4 hnu + 2 H2O = 2 a plastoquinol + O2. Its function is as follows. Photosystem II (PSII) is a light-driven water:plastoquinone oxidoreductase that uses light energy to abstract electrons from H(2)O, generating O(2) and a proton gradient subsequently used for ATP formation. It consists of a core antenna complex that captures photons, and an electron transfer chain that converts photonic excitation into a charge separation. The D1/D2 (PsbA/PsbD) reaction center heterodimer binds P680, the primary electron donor of PSII as well as several subsequent electron acceptors. D2 is needed for assembly of a stable PSII complex. The sequence is that of Photosystem II D2 protein from Cuscuta exaltata (Tall dodder).